Here is a 404-residue protein sequence, read N- to C-terminus: Multidrug resistance protein MdtG (404 aa).

11 consecutive transmembrane segments (helical) span residues 19–39 (LGCFLTGAAFSLVMPFLPLYV), 56–76 (LVFSITFLFSAIASPFWGGLA), 90–110 (LGMAIVMLLMGMAQNIWQFLI), 113–133 (ALLGLLGGFIPNANALIATQV), 144–164 (TLSTGGVSGALLGPLAGGLLA), 171–191 (PVFFITASVLFICFLLTFFFI), 222–242 (LFVTTLIIQVATGSIAPILTL), 254–274 (IAFISGMIASVPGVAALLSAP), 288–308 (ILIVALIISVLLLIPMSFVQT), 317–337 (FLLGAADGALLPAVQTLLVYN), and 376–396 (AVFCVTAGVVLFNAIYSWNSL).

This sequence belongs to the major facilitator superfamily. DHA1 family. MdtG (TC 2.A.1.2.20) subfamily.

The protein resides in the cell inner membrane. The protein is Multidrug resistance protein MdtG of Salmonella agona (strain SL483).